The chain runs to 189 residues: UPF0398 protein LGAS_1023 (189 aa).

This sequence belongs to the UPF0398 family.

The sequence is that of UPF0398 protein LGAS_1023 from Lactobacillus gasseri (strain ATCC 33323 / DSM 20243 / BCRC 14619 / CIP 102991 / JCM 1131 / KCTC 3163 / NCIMB 11718 / NCTC 13722 / AM63).